Here is a 79-residue protein sequence, read N- to C-terminus: Methionine-rich peptide X (79 aa).

The first 22 residues, 1 to 22 (MKKLAAVMLTSCLMVAVGASFA), serve as a signal peptide directing secretion. Residues 37–79 (KKDDMAKDEMKKDSMAKDGMKKDAMKKDAMMKKDGMTKDEMKK) form a disordered region.

In terms of processing, protein is oxidized (possibly on Met residues) when cells are exposed to chlorite or hypochlorite; initially the protein is highly oxidized, by 50 minutes all protein is in the reduced form.

It is found in the periplasm. Serves as an oxidative stress sink, specifically for chlorite and hypochlorite. This chain is Methionine-rich peptide X, found in Azospira oryzae (strain ATCC BAA-33 / DSM 13638 / PS) (Dechlorosoma suillum).